The following is a 127-amino-acid chain: Large ribosomal subunit protein bL20 (127 aa).

This sequence belongs to the bacterial ribosomal protein bL20 family.

Its function is as follows. Binds directly to 23S ribosomal RNA and is necessary for the in vitro assembly process of the 50S ribosomal subunit. It is not involved in the protein synthesizing functions of that subunit. This Corynebacterium jeikeium (strain K411) protein is Large ribosomal subunit protein bL20.